A 128-amino-acid chain; its full sequence is Large ribosomal subunit protein bL12 (128 aa).

This sequence belongs to the bacterial ribosomal protein bL12 family. Homodimer. Part of the ribosomal stalk of the 50S ribosomal subunit. Forms a multimeric L10(L12)X complex, where L10 forms an elongated spine to which 2 to 4 L12 dimers bind in a sequential fashion. Binds GTP-bound translation factors.

In terms of biological role, forms part of the ribosomal stalk which helps the ribosome interact with GTP-bound translation factors. Is thus essential for accurate translation. This chain is Large ribosomal subunit protein bL12, found in Brachyspira hyodysenteriae (strain ATCC 49526 / WA1).